The primary structure comprises 149 residues: Cell division protein SepF (149 aa).

This sequence belongs to the SepF family. As to quaternary structure, homodimer. Interacts with FtsZ.

It localises to the cytoplasm. Functionally, cell division protein that is part of the divisome complex and is recruited early to the Z-ring. Probably stimulates Z-ring formation, perhaps through the cross-linking of FtsZ protofilaments. Its function overlaps with FtsA. The chain is Cell division protein SepF from Pelotomaculum thermopropionicum (strain DSM 13744 / JCM 10971 / SI).